Reading from the N-terminus, the 102-residue chain is Death-associated protein 1 (102 aa).

Positions 1 to 102 (MSSPPEGKLE…RTQHIQQPRK (102 aa)) are disordered. Ser-2 carries the post-translational modification N-acetylserine. Ser-3 bears the Phosphoserine; by MTOR mark. Lys-29 is modified (N6-acetyllysine). Residues 32–43 (HTGDTKEEKDKD) show a composition bias toward basic and acidic residues. Position 49 is a phosphoserine (Ser-49). Residue Ser-51 is modified to Phosphoserine; by MTOR. Ser-91 carries the post-translational modification Phosphoserine. Residues 92–102 (PRTQHIQQPRK) are compositionally biased toward polar residues.

It belongs to the DAP-DAPL1 family. In terms of assembly, associates with ribosomes; inhibiting translation. Interacts with eiF5a (EIF5A and EIF5A2); inhibiting translation. Post-translationally, phosphorylated. Phosphorylation by MTOR inhibits the suppressive activity of DAP toward autophagy.

In terms of biological role, ribosome-binding protein involved in ribosome hibernation, a process during which ribosomes are stabilized in an inactive state and preserved from proteasomal degradation. Acts via its association with eiF5a (EIF5A and EIF5A2) at the polypeptide exit tunnel of the ribosome, preventing mRNA translation. Involved in ribosome hibernation in the mature oocyte by preventing mRNA translation, leading to ribosome inactivation. Ribosomes, which are produced in large quantities during oogenesis, are stored and translationally repressed in the oocyte and early embryo. Also acts as a negative regulator of autophagy. Involved in mediating interferon-gamma-induced cell death. This Homo sapiens (Human) protein is Death-associated protein 1.